Consider the following 354-residue polypeptide: UPF0283 membrane protein Meso_1416 (354 aa).

The tract at residues 1–28 (MSEPRRPAAFRIEPAPSPSPEATREDVR) is disordered. A run of 2 helical transmembrane segments spans residues 71–91 (LGAV…GLWA) and 105–125 (LGWL…AIVV).

This sequence belongs to the UPF0283 family.

It localises to the cell inner membrane. This is UPF0283 membrane protein Meso_1416 from Chelativorans sp. (strain BNC1).